Here is a 584-residue protein sequence, read N- to C-terminus: High-affinity choline transporter 1 (584 aa).

The Extracellular portion of the chain corresponds to 1–6 (MTVHID). The chain crosses the membrane as a helical span at residues 7-27 (GIVAIVLFYLLILFVGLWAAW). The Cytoplasmic segment spans residues 28–50 (KSKNTSMEGAMDRSEAIMIGGRD). The chain crosses the membrane as a helical span at residues 51–71 (IGLLVGGFTMTATWVGGGYIN). Topologically, residues 72–83 (GTAEAVYVPGYG) are extracellular. Residues 84–104 (LAWAQAPFGYALSLVIGGLFF) form a helical membrane-spanning segment. At 105–127 (AKPMRSRGYVTMLDPFQQMYGKR) the chain is on the cytoplasmic side. Residues 128–148 (MGGLLFIPALLGEIFWSAAIL) form a helical membrane-spanning segment. The Extracellular segment spans residues 149 to 166 (SALGATLSVIVDININVS). A helical membrane pass occupies residues 167–187 (VVVSAVIAVLYTLVGGLYSVA). The Cytoplasmic portion of the chain corresponds to 188–193 (YTDVVQ). Residues 194 to 214 (LFCIFLGLWISIPFALLNPAV) form a helical membrane-spanning segment. The Extracellular portion of the chain corresponds to 215-239 (TDIIVTANQEVYQEPWVGNIQSKDS). A helical transmembrane segment spans residues 240–260 (LIWIDNFLLLMLGGIPWQVYF). Over 261-276 (QRVLSASSATYAQVLS) the chain is Cytoplasmic. Residues 277–297 (FLAAFGCVLMAIPSVLIGAIG) traverse the membrane as a helical segment. The Extracellular segment spans residues 298-319 (TSTDWNQTSYGLPGPIGKNETD). A glycan (N-linked (GlcNAc...) asparagine) is linked at N303. Residues 320–340 (MILPIVLQHLCPPYISFFGLG) form a helical membrane-spanning segment. Residues 341 to 378 (AVSAAVMSSADSSILSASSMFARNIYHLAFRQEASDKE) lie on the Cytoplasmic side of the membrane. Residues 379–399 (IVWVMRITIFLFGGAATSMAL) form a helical membrane-spanning segment. Over 400-408 (LAQSIYGLW) the chain is Extracellular. The helical transmembrane segment at 409–429 (YLSSDLVYVIIFPQLISVLFV) threads the bilayer. Residues 430-437 (KGTNTYGS) lie on the Cytoplasmic side of the membrane. The chain crosses the membrane as a helical span at residues 438–458 (IAGYIIGFLLRISGGEPYLHM). Over 459 to 487 (QPFIYYPGCYLDHSFGDDPVYVQRFPFKT) the chain is Extracellular. Residues 488 to 508 (MAMLFSFLGNTGVSYLVKYLF) form a helical membrane-spanning segment. Residues 509–584 (VSGILPPKLD…NPELSKSGND (76 aa)) lie on the Cytoplasmic side of the membrane.

The protein belongs to the sodium:solute symporter (SSF) (TC 2.A.21) family. In terms of processing, phosphorylated. In terms of tissue distribution, specific for cholinergic neurons.

Its subcellular location is the membrane. In terms of biological role, imports choline from the extracellular space to the neuron with high affinity. Rate-limiting step in acetylcholine synthesis. Sodium ion and chloride ion dependent. This Torpedo marmorata (Marbled electric ray) protein is High-affinity choline transporter 1 (CHT1).